Reading from the N-terminus, the 94-residue chain is Large ribosomal subunit protein bL25 (94 aa).

This sequence belongs to the bacterial ribosomal protein bL25 family. Part of the 50S ribosomal subunit; part of the 5S rRNA/L5/L18/L25 subcomplex. Contacts the 5S rRNA. Binds to the 5S rRNA independently of L5 and L18.

In terms of biological role, this is one of the proteins that binds to the 5S RNA in the ribosome where it forms part of the central protuberance. This chain is Large ribosomal subunit protein bL25, found in Sodalis glossinidius (strain morsitans).